A 787-amino-acid polypeptide reads, in one-letter code: Pyridoxal-dependent decarboxylase domain-containing protein 1 (787 aa).

Basic and acidic residues predominate over residues 26–44; sequence MLEKSPRRTEEENGKKPVS. The disordered stretch occupies residues 26 to 52; the sequence is MLEKSPRRTEEENGKKPVSEDIPGPLQ. S652 bears the Phosphoserine mark. The interval 682–787 is disordered; it reads QGTGVTPPPT…SQVEELERLR (106 aa). Residues T687 and T691 each carry the phosphothreonine modification. Residues S710, S718, S722, and S748 each carry the phosphoserine modification. Positions 725–748 are enriched in basic and acidic residues; it reads HIEDLEKVEQLSSGLEHDNLEAHS. Residues 759-771 are compositionally biased toward polar residues; that stretch reads TARQTEALQNQAQ. Over residues 772-787 the composition is skewed to basic and acidic residues; sequence HQEDDHSQVEELERLR. Phosphoserine is present on S778.

The protein belongs to the group II decarboxylase family. It depends on pyridoxal 5'-phosphate as a cofactor.

This is Pyridoxal-dependent decarboxylase domain-containing protein 1 (Pdxdc1) from Mus musculus (Mouse).